Reading from the N-terminus, the 342-residue chain is Spermidine synthase (342 aa).

Residues 9–42 (MKGTELPVKRPREEEAETEMEAANNSNNGCEKEE) are disordered. The 238-residue stretch at 52-289 (PGWFSEISPL…GMIGFMLCST (238 aa)) folds into the PABS domain. Glutamine 83 provides a ligand contact to S-adenosyl 3-(methylsulfanyl)propylamine. Residue tyrosine 113 coordinates putrescine. Residues glutamine 114, aspartate 138, glutamate 158, 189–190 (DG), and aspartate 208 contribute to the S-adenosyl 3-(methylsulfanyl)propylamine site. Aspartate 208 acts as the Proton acceptor in catalysis. Residues 208 to 211 (DSSD) and tyrosine 277 each bind putrescine.

Belongs to the spermidine/spermine synthase family.

It carries out the reaction S-adenosyl 3-(methylsulfanyl)propylamine + putrescine = S-methyl-5'-thioadenosine + spermidine + H(+). It functions in the pathway amine and polyamine biosynthesis; spermidine biosynthesis; spermidine from putrescine: step 1/1. The sequence is that of Spermidine synthase (SPDSYN) from Solanum lycopersicum (Tomato).